Reading from the N-terminus, the 460-residue chain is MLTIYNTLTKSKEVFKPLDGNKVRMYVCGMTVYDYCHLGHGRSMVAFDLVTRWLRFSGYDLTYVRNITDIDDKIINRANENGESFEALTERMIAAMHEDEARLNIKKPDMEPRATDHIPGMHAMIQTLIDKGYAYAPGNGDVYYRVGKFMGYGKLSRKKIEDLRIGARIEVDEAKEDPLDFVLWKGVKPGEPSWESPWGAGRPGWHIECSVMSTCCLGETFDIHGGGSDLEFPHHENEIAQSEAATGKTYANAWMHCGMIRINGEKMSKSLNNFFTIRDVLDKYHPEVVRYLLVSSHYRSAINYSEDNLKDAKGALERFYHALKGLPKVAPAGGEAFVERFTQVMNDDFGTPEACAVLFEMVREINRLRESDLDAAAGLAARLKELASVLGVLQLEADDFLQAGAEGRVDAAEVDALIQARLTARANKDWAESDRIRDQLTAMGVVLEDGKGGTTWRLAD.

C28 contacts Zn(2+). The 'HIGH' region motif lies at 30–40; that stretch reads MTVYDYCHLGH. Residues C209, H234, and E238 each contribute to the Zn(2+) site. Residues 266–270 carry the 'KMSKS' region motif; that stretch reads KMSKS. K269 is a binding site for ATP.

Belongs to the class-I aminoacyl-tRNA synthetase family. As to quaternary structure, monomer. The cofactor is Zn(2+).

The protein localises to the cytoplasm. It catalyses the reaction tRNA(Cys) + L-cysteine + ATP = L-cysteinyl-tRNA(Cys) + AMP + diphosphate. This is Cysteine--tRNA ligase from Pseudomonas fluorescens (strain Pf0-1).